Here is a 1793-residue protein sequence, read N- to C-terminus: Protein TIC 214 (1793 aa).

6 helical membrane-spanning segments follow: residues 11 to 31 (LVSL…YYGF), 64 to 84 (FITG…HIAL), 90 to 112 (ITVI…NFLN), 129 to 149 (IFFQ…SSIL), 172 to 192 (VGWL…LVWI), and 222 to 242 (IFLI…PPIY). The tract at residues 1504–1524 (DIEEDYGESDSKKGGKDKNKK) is disordered.

Belongs to the TIC214 family. Part of the Tic complex.

It localises to the plastid. The protein resides in the chloroplast inner membrane. In terms of biological role, involved in protein precursor import into chloroplasts. May be part of an intermediate translocation complex acting as a protein-conducting channel at the inner envelope. The sequence is that of Protein TIC 214 from Lotus japonicus (Lotus corniculatus var. japonicus).